Consider the following 556-residue polypeptide: 2-succinyl-5-enolpyruvyl-6-hydroxy-3-cyclohexene-1-carboxylate synthase (556 aa).

The protein belongs to the TPP enzyme family. MenD subfamily. Homodimer. Mg(2+) serves as cofactor. Mn(2+) is required as a cofactor. The cofactor is thiamine diphosphate.

It carries out the reaction isochorismate + 2-oxoglutarate + H(+) = 5-enolpyruvoyl-6-hydroxy-2-succinyl-cyclohex-3-ene-1-carboxylate + CO2. It participates in quinol/quinone metabolism; 1,4-dihydroxy-2-naphthoate biosynthesis; 1,4-dihydroxy-2-naphthoate from chorismate: step 2/7. The protein operates within quinol/quinone metabolism; menaquinone biosynthesis. Catalyzes the thiamine diphosphate-dependent decarboxylation of 2-oxoglutarate and the subsequent addition of the resulting succinic semialdehyde-thiamine pyrophosphate anion to isochorismate to yield 2-succinyl-5-enolpyruvyl-6-hydroxy-3-cyclohexene-1-carboxylate (SEPHCHC). In Escherichia coli (strain SMS-3-5 / SECEC), this protein is 2-succinyl-5-enolpyruvyl-6-hydroxy-3-cyclohexene-1-carboxylate synthase.